Reading from the N-terminus, the 370-residue chain is tRNA-specific 2-thiouridylase MnmA (370 aa).

ATP contacts are provided by residues 10–17 and Met36; that span reads AMSGGVDS. Catalysis depends on Cys111, which acts as the Nucleophile. A disulfide bridge links Cys111 with Cys209. ATP is bound at residue Gly135. Positions 159–161 are interaction with tRNA; the sequence is KDQ. Cys209 (cysteine persulfide intermediate) is an active-site residue.

The protein belongs to the MnmA/TRMU family.

Its subcellular location is the cytoplasm. The catalysed reaction is S-sulfanyl-L-cysteinyl-[protein] + uridine(34) in tRNA + AH2 + ATP = 2-thiouridine(34) in tRNA + L-cysteinyl-[protein] + A + AMP + diphosphate + H(+). Catalyzes the 2-thiolation of uridine at the wobble position (U34) of tRNA, leading to the formation of s(2)U34. This Koribacter versatilis (strain Ellin345) protein is tRNA-specific 2-thiouridylase MnmA.